The primary structure comprises 22 residues: thr operon leader peptide (22 aa).

The protein belongs to the thr operon leader peptide family.

Its function is as follows. This protein is involved in control of the biosynthesis of threonine. The sequence is that of thr operon leader peptide from Klebsiella pneumoniae (strain 342).